Consider the following 317-residue polypeptide: 4-hydroxy-3-methylbut-2-enyl diphosphate reductase (317 aa).

Cysteine 12 is a [4Fe-4S] cluster binding site. The (2E)-4-hydroxy-3-methylbut-2-enyl diphosphate site is built by histidine 41 and histidine 74. Dimethylallyl diphosphate-binding residues include histidine 41 and histidine 74. Histidine 41 and histidine 74 together coordinate isopentenyl diphosphate. Cysteine 97 lines the [4Fe-4S] cluster pocket. Histidine 125 contacts (2E)-4-hydroxy-3-methylbut-2-enyl diphosphate. Histidine 125 contacts dimethylallyl diphosphate. Histidine 125 contributes to the isopentenyl diphosphate binding site. Glutamate 127 serves as the catalytic Proton donor. Threonine 168 is a binding site for (2E)-4-hydroxy-3-methylbut-2-enyl diphosphate. Cysteine 198 is a [4Fe-4S] cluster binding site. (2E)-4-hydroxy-3-methylbut-2-enyl diphosphate contacts are provided by serine 226, serine 227, asparagine 228, and serine 270. Residues serine 226, serine 227, asparagine 228, and serine 270 each contribute to the dimethylallyl diphosphate site. Isopentenyl diphosphate-binding residues include serine 226, serine 227, asparagine 228, and serine 270.

The protein belongs to the IspH family. As to quaternary structure, homodimer. [4Fe-4S] cluster is required as a cofactor.

It catalyses the reaction isopentenyl diphosphate + 2 oxidized [2Fe-2S]-[ferredoxin] + H2O = (2E)-4-hydroxy-3-methylbut-2-enyl diphosphate + 2 reduced [2Fe-2S]-[ferredoxin] + 2 H(+). It carries out the reaction dimethylallyl diphosphate + 2 oxidized [2Fe-2S]-[ferredoxin] + H2O = (2E)-4-hydroxy-3-methylbut-2-enyl diphosphate + 2 reduced [2Fe-2S]-[ferredoxin] + 2 H(+). It functions in the pathway isoprenoid biosynthesis; dimethylallyl diphosphate biosynthesis; dimethylallyl diphosphate from (2E)-4-hydroxy-3-methylbutenyl diphosphate: step 1/1. It participates in isoprenoid biosynthesis; isopentenyl diphosphate biosynthesis via DXP pathway; isopentenyl diphosphate from 1-deoxy-D-xylulose 5-phosphate: step 6/6. Functionally, catalyzes the conversion of 1-hydroxy-2-methyl-2-(E)-butenyl 4-diphosphate (HMBPP) into a mixture of isopentenyl diphosphate (IPP) and dimethylallyl diphosphate (DMAPP). Acts in the terminal step of the DOXP/MEP pathway for isoprenoid precursor biosynthesis. The polypeptide is 4-hydroxy-3-methylbut-2-enyl diphosphate reductase (Edwardsiella ictaluri (strain 93-146)).